The chain runs to 43 residues: Histone H3 (43 aa).

In terms of assembly, the nucleosome is a histone octamer containing two molecules each of H2A, H2B, H3 and H4 assembled in one H3-H4 heterotetramer and two H2A-H2B heterodimers. The octamer wraps approximately 147 bp of DNA.

The protein resides in the nucleus. It is found in the chromosome. Its function is as follows. Core component of nucleosome. Nucleosomes wrap and compact DNA into chromatin, limiting DNA accessibility to the cellular machineries which require DNA as a template. Histones thereby play a central role in transcription regulation, DNA repair, DNA replication and chromosomal stability. DNA accessibility is regulated via a complex set of post-translational modifications of histones, also called histone code, and nucleosome remodeling. The sequence is that of Histone H3 from Penaeus vannamei (Whiteleg shrimp).